Reading from the N-terminus, the 330-residue chain is MARMYYDEDANLDLLAGKTIAIIGYGSQGHAHALNLKDSGVNVIVGLYPGSKSAIKAKEAGIPVYDVAEAAKIADWIMILLPDEVQKTIYLNEIAPNLSAGKVLSFAHGFNIHFGQVVPPANVDVVMVAPKGPGHLVRRTYEQGQGVPCLFAVYQDATGQARDRAMAYAKGIGGTRAGVLETTFREETETDLFGEQAVLCGGLSALIKAGFETLVEAGYQPELAYFECLHEVKLIVDLIVEGGLAKMRDSISNTAEYGDYTRGPRVVTEATKAEMRKILGEIQSGQFAREFVLENQAGKPGFTAMRRQEAEHSIEEVGQDLRAMMSWLKR.

The KARI N-terminal Rossmann domain occupies 2–182 (ARMYYDEDAN…GGTRAGVLET (181 aa)). Residues 25 to 28 (YGSQ), S51, S53, and 83 to 86 (DEVQ) each bind NADP(+). Residue H108 is part of the active site. G134 contributes to the NADP(+) binding site. Residues 183 to 328 (TFREETETDL…QDLRAMMSWL (146 aa)) form the KARI C-terminal knotted domain. D191, E195, E227, and E231 together coordinate Mg(2+). S252 provides a ligand contact to substrate.

Belongs to the ketol-acid reductoisomerase family. Mg(2+) is required as a cofactor.

It catalyses the reaction (2R)-2,3-dihydroxy-3-methylbutanoate + NADP(+) = (2S)-2-acetolactate + NADPH + H(+). The catalysed reaction is (2R,3R)-2,3-dihydroxy-3-methylpentanoate + NADP(+) = (S)-2-ethyl-2-hydroxy-3-oxobutanoate + NADPH + H(+). It functions in the pathway amino-acid biosynthesis; L-isoleucine biosynthesis; L-isoleucine from 2-oxobutanoate: step 2/4. Its pathway is amino-acid biosynthesis; L-valine biosynthesis; L-valine from pyruvate: step 2/4. In terms of biological role, involved in the biosynthesis of branched-chain amino acids (BCAA). Catalyzes an alkyl-migration followed by a ketol-acid reduction of (S)-2-acetolactate (S2AL) to yield (R)-2,3-dihydroxy-isovalerate. In the isomerase reaction, S2AL is rearranged via a Mg-dependent methyl migration to produce 3-hydroxy-3-methyl-2-ketobutyrate (HMKB). In the reductase reaction, this 2-ketoacid undergoes a metal-dependent reduction by NADPH to yield (R)-2,3-dihydroxy-isovalerate. In Microcystis aeruginosa (strain NIES-843 / IAM M-2473), this protein is Ketol-acid reductoisomerase (NADP(+)).